The following is a 229-amino-acid chain: UPF0173 metal-dependent hydrolase SAB1566c (229 aa).

Belongs to the UPF0173 family.

This is UPF0173 metal-dependent hydrolase SAB1566c from Staphylococcus aureus (strain bovine RF122 / ET3-1).